Consider the following 290-residue polypeptide: Acetyl-coenzyme A carboxylase carboxyl transferase subunit beta (290 aa).

Positions 28-290 (IMTKCPKCKK…SRGGDEWHTN (263 aa)) constitute a CoA carboxyltransferase N-terminal domain. Zn(2+)-binding residues include Cys32, Cys35, Cys51, and Cys54. The C4-type zinc finger occupies 32–54 (CPKCKKIMYTKELVKNLRVCISC).

Belongs to the AccD/PCCB family. Acetyl-CoA carboxylase is a heterohexamer composed of biotin carboxyl carrier protein (AccB), biotin carboxylase (AccC) and two subunits each of ACCase subunit alpha (AccA) and ACCase subunit beta (AccD). It depends on Zn(2+) as a cofactor.

The protein resides in the cytoplasm. The enzyme catalyses N(6)-carboxybiotinyl-L-lysyl-[protein] + acetyl-CoA = N(6)-biotinyl-L-lysyl-[protein] + malonyl-CoA. Its pathway is lipid metabolism; malonyl-CoA biosynthesis; malonyl-CoA from acetyl-CoA: step 1/1. Its function is as follows. Component of the acetyl coenzyme A carboxylase (ACC) complex. Biotin carboxylase (BC) catalyzes the carboxylation of biotin on its carrier protein (BCCP) and then the CO(2) group is transferred by the transcarboxylase to acetyl-CoA to form malonyl-CoA. The chain is Acetyl-coenzyme A carboxylase carboxyl transferase subunit beta from Anoxybacillus flavithermus (strain DSM 21510 / WK1).